Consider the following 234-residue polypeptide: UPF0758 protein STH371 (234 aa).

Residues 110-232 (DLCNPRAVFE…YTSFRERGLL (123 aa)) enclose the MPN domain. Zn(2+) is bound by residues His181, His183, and Asp194. The short motif at 181–194 (HNHPSGDPTPSRED) is the JAMM motif element.

Belongs to the UPF0758 family.

The protein is UPF0758 protein STH371 of Symbiobacterium thermophilum (strain DSM 24528 / JCM 14929 / IAM 14863 / T).